The sequence spans 114 residues: T cell receptor beta variable 4-3 (114 aa).

Positions 1 to 21 (MGCRLLCCAVLCLLGAVPMET) are cleaved as a signal peptide. The Ig-like domain maps to 22–114 (GVTQTPRHLV…SALYLCASSQ (93 aa)). A disulfide bridge connects residues C42 and C110. Residues N76 and N89 are each glycosylated (N-linked (GlcNAc...) asparagine).

Alpha-beta TR is a heterodimer composed of an alpha and beta chain; disulfide-linked. The alpha-beta TR is associated with the transmembrane signaling CD3 coreceptor proteins to form the TR-CD3 (TcR or TCR). The assembly of alpha-beta TR heterodimers with CD3 occurs in the endoplasmic reticulum where a single alpha-beta TR heterodimer associates with one CD3D-CD3E heterodimer, one CD3G-CD3E heterodimer and one CD247 homodimer forming a stable octameric structure. CD3D-CD3E and CD3G-CD3E heterodimers preferentially associate with TR alpha and TR beta chains, respectively. The association of the CD247 homodimer is the last step of TcR assembly in the endoplasmic reticulum and is required for transport to the cell surface.

It is found in the cell membrane. Its function is as follows. V region of the variable domain of T cell receptor (TR) beta chain that participates in the antigen recognition. Alpha-beta T cell receptors are antigen specific receptors which are essential to the immune response and are present on the cell surface of T lymphocytes. Recognize peptide-major histocompatibility (MH) (pMH) complexes that are displayed by antigen presenting cells (APC), a prerequisite for efficient T cell adaptive immunity against pathogens. Binding of alpha-beta TR to pMH complex initiates TR-CD3 clustering on the cell surface and intracellular activation of LCK that phosphorylates the ITAM motifs of CD3G, CD3D, CD3E and CD247 enabling the recruitment of ZAP70. In turn ZAP70 phosphorylates LAT, which recruits numerous signaling molecules to form the LAT signalosome. The LAT signalosome propagates signal branching to three major signaling pathways, the calcium, the mitogen-activated protein kinase (MAPK) kinase and the nuclear factor NF-kappa-B (NF-kB) pathways, leading to the mobilization of transcription factors that are critical for gene expression and essential for T cell growth and differentiation. The T cell repertoire is generated in the thymus, by V-(D)-J rearrangement. This repertoire is then shaped by intrathymic selection events to generate a peripheral T cell pool of self-MH restricted, non-autoaggressive T cells. Post-thymic interaction of alpha-beta TR with the pMH complexes shapes TR structural and functional avidity. The sequence is that of T cell receptor beta variable 4-3 from Homo sapiens (Human).